The chain runs to 188 residues: Der GTPase-activating protein YihI (188 aa).

Disordered regions lie at residues 1–80 and 162–188; these read MKQP…VPVP and DEDD…KDTF. Over residues 27-37 the composition is skewed to basic and acidic residues; that stretch reads TRDELDAEARD. Positions 47–57 are enriched in polar residues; it reads NRSGARTNVEG.

Belongs to the YihI family. As to quaternary structure, interacts with Der.

Functionally, a GTPase-activating protein (GAP) that modifies Der/EngA GTPase function. May play a role in ribosome biogenesis. This Yersinia pseudotuberculosis serotype O:3 (strain YPIII) protein is Der GTPase-activating protein YihI.